The primary structure comprises 383 residues: L-lactate dehydrogenase (383 aa).

One can recognise an FMN hydroxy acid dehydrogenase domain in the interval 1 to 380 (MIIASTFDYR…TCESLVNTDA (380 aa)). Y24 is a binding site for substrate. FMN contacts are provided by S106 and Q127. Y129 is a substrate binding site. T155 provides a ligand contact to FMN. R164 is a binding site for substrate. Position 251 (K251) interacts with FMN. H275 functions as the Proton acceptor in the catalytic mechanism. R278 lines the substrate pocket. 306–330 (DSGVRSGLDVVRMIAQGADAVMIGR) contacts FMN.

This sequence belongs to the FMN-dependent alpha-hydroxy acid dehydrogenase family. FMN serves as cofactor.

Its subcellular location is the cell inner membrane. It carries out the reaction (S)-lactate + A = pyruvate + AH2. Functionally, catalyzes the conversion of L-lactate to pyruvate. Is coupled to the respiratory chain. This Bartonella tribocorum (strain CIP 105476 / IBS 506) protein is L-lactate dehydrogenase.